The chain runs to 138 residues: uncharacterized protein (138 aa).

The segment at residues 17-38 (LCRNDVAHEAGTNNVQIMRIEK) is a DNA-binding region (H-T-H motif).

This is an uncharacterized protein from Herpetosiphon aurantiacus (Herpetosiphon giganteus).